The chain runs to 204 residues: Small ribosomal subunit protein uS7 (204 aa).

Methionine 1 bears the N-acetylmethionine mark. Threonine 2 bears the N-acetylthreonine; in 40S ribosomal protein S5, N-terminally processed mark. The residue at position 14 (threonine 14) is a Phosphothreonine. Position 47 is an N6-acetyllysine; alternate (lysine 47). Residue lysine 47 forms a Glycyl lysine isopeptide (Lys-Gly) (interchain with G-Cter in SUMO2); alternate linkage. Residue serine 142 is modified to Phosphoserine.

This sequence belongs to the universal ribosomal protein uS7 family. Component of the small ribosomal subunit. Part of the small subunit (SSU) processome, composed of more than 70 proteins and the RNA chaperone small nucleolar RNA (snoRNA) U3.

It localises to the cytoplasm. It is found in the nucleus. The protein resides in the nucleolus. Its function is as follows. Component of the small ribosomal subunit. The ribosome is a large ribonucleoprotein complex responsible for the synthesis of proteins in the cell. Part of the small subunit (SSU) processome, first precursor of the small eukaryotic ribosomal subunit. During the assembly of the SSU processome in the nucleolus, many ribosome biogenesis factors, an RNA chaperone and ribosomal proteins associate with the nascent pre-rRNA and work in concert to generate RNA folding, modifications, rearrangements and cleavage as well as targeted degradation of pre-ribosomal RNA by the RNA exosome. This chain is Small ribosomal subunit protein uS7 (Rps5), found in Rattus norvegicus (Rat).